The primary structure comprises 150 residues: UPF0098 protein CT_736 (150 aa).

It belongs to the UPF0098 family.

The chain is UPF0098 protein CT_736 from Chlamydia trachomatis serovar D (strain ATCC VR-885 / DSM 19411 / UW-3/Cx).